Reading from the N-terminus, the 371-residue chain is Tetraacyldisaccharide 4'-kinase (371 aa).

48 to 55 is an ATP binding site; that stretch reads SAGGTGKT.

It belongs to the LpxK family.

The catalysed reaction is a lipid A disaccharide + ATP = a lipid IVA + ADP + H(+). Its pathway is glycolipid biosynthesis; lipid IV(A) biosynthesis; lipid IV(A) from (3R)-3-hydroxytetradecanoyl-[acyl-carrier-protein] and UDP-N-acetyl-alpha-D-glucosamine: step 6/6. Its function is as follows. Transfers the gamma-phosphate of ATP to the 4'-position of a tetraacyldisaccharide 1-phosphate intermediate (termed DS-1-P) to form tetraacyldisaccharide 1,4'-bis-phosphate (lipid IVA). This Chlorobium chlorochromatii (strain CaD3) protein is Tetraacyldisaccharide 4'-kinase.